The chain runs to 253 residues: Triosephosphate isomerase (253 aa).

Residue 9-11 participates in substrate binding; the sequence is NWK. His98 (electrophile) is an active-site residue. The active-site Proton acceptor is the Glu170. Substrate-binding positions include Gly176, Ser216, and 237-238; that span reads GG.

It belongs to the triosephosphate isomerase family. In terms of assembly, homodimer.

The protein localises to the cytoplasm. It catalyses the reaction D-glyceraldehyde 3-phosphate = dihydroxyacetone phosphate. It participates in carbohydrate biosynthesis; gluconeogenesis. The protein operates within carbohydrate degradation; glycolysis; D-glyceraldehyde 3-phosphate from glycerone phosphate: step 1/1. In terms of biological role, involved in the gluconeogenesis. Catalyzes stereospecifically the conversion of dihydroxyacetone phosphate (DHAP) to D-glyceraldehyde-3-phosphate (G3P). The chain is Triosephosphate isomerase from Amoebophilus asiaticus (strain 5a2).